The primary structure comprises 64 residues: Large ribosomal subunit protein bL35 (64 aa).

The span at 1–28 (MPKMKTKSGAAKRFKKTAGGLKHKHAFK) shows a compositional bias: basic residues. The interval 1 to 64 (MPKMKTKSGA…ARVERSLRLR (64 aa)) is disordered. The segment covering 53 to 64 (DVARVERSLRLR) has biased composition (basic and acidic residues).

It belongs to the bacterial ribosomal protein bL35 family.

This is Large ribosomal subunit protein bL35 from Pseudomonas aeruginosa (strain LESB58).